The chain runs to 342 residues: MDNERVITAVAVGSQEEQQDRAIRPASLADYHGQPKVSERMEIFIDAARGRNEALDHTLIFGPPGLGKTTLAHIIAREMGCDLKSTSGPVLEKAGDLAAILTNLEEGDVLFVDEIHRLSPVVEEILYPAMEDYQLDIMIGEGPAARSIKLDLPPFTLVGATTRAGLLTAPLRDRFGIVQRLEFYSVDDLSGIVSRACDILAIPIEAAGAMEVARRARGTPRIANRLLRRVRDYAEVKGDGRITEEIAQRALDMLEVDSCGLDGTDRRLLDMIMHKFDGGPVGLESLAAALNEDSGTLEEVVEPYLIQQGFIQRTPRGRAVTNHAWRHFGLQRPRQDGDLFND.

Residues 1 to 184 are large ATPase domain (RuvB-L); sequence MDNERVITAV…FGIVQRLEFY (184 aa). ATP contacts are provided by residues Ile-23, Arg-24, Gly-65, Lys-68, Thr-69, Thr-70, 131 to 133, Arg-174, Tyr-184, and Arg-221; that span reads EDY. Position 69 (Thr-69) interacts with Mg(2+). A small ATPAse domain (RuvB-S) region spans residues 185–255; that stretch reads SVDDLSGIVS…IAQRALDMLE (71 aa). The head domain (RuvB-H) stretch occupies residues 258-342; that stretch reads SCGLDGTDRR…PRQDGDLFND (85 aa). 2 residues coordinate DNA: Arg-313 and Arg-318.

The protein belongs to the RuvB family. In terms of assembly, homohexamer. Forms an RuvA(8)-RuvB(12)-Holliday junction (HJ) complex. HJ DNA is sandwiched between 2 RuvA tetramers; dsDNA enters through RuvA and exits via RuvB. An RuvB hexamer assembles on each DNA strand where it exits the tetramer. Each RuvB hexamer is contacted by two RuvA subunits (via domain III) on 2 adjacent RuvB subunits; this complex drives branch migration. In the full resolvosome a probable DNA-RuvA(4)-RuvB(12)-RuvC(2) complex forms which resolves the HJ.

The protein localises to the cytoplasm. It catalyses the reaction ATP + H2O = ADP + phosphate + H(+). Functionally, the RuvA-RuvB-RuvC complex processes Holliday junction (HJ) DNA during genetic recombination and DNA repair, while the RuvA-RuvB complex plays an important role in the rescue of blocked DNA replication forks via replication fork reversal (RFR). RuvA specifically binds to HJ cruciform DNA, conferring on it an open structure. The RuvB hexamer acts as an ATP-dependent pump, pulling dsDNA into and through the RuvAB complex. RuvB forms 2 homohexamers on either side of HJ DNA bound by 1 or 2 RuvA tetramers; 4 subunits per hexamer contact DNA at a time. Coordinated motions by a converter formed by DNA-disengaged RuvB subunits stimulates ATP hydrolysis and nucleotide exchange. Immobilization of the converter enables RuvB to convert the ATP-contained energy into a lever motion, pulling 2 nucleotides of DNA out of the RuvA tetramer per ATP hydrolyzed, thus driving DNA branch migration. The RuvB motors rotate together with the DNA substrate, which together with the progressing nucleotide cycle form the mechanistic basis for DNA recombination by continuous HJ branch migration. Branch migration allows RuvC to scan DNA until it finds its consensus sequence, where it cleaves and resolves cruciform DNA. The chain is Holliday junction branch migration complex subunit RuvB from Alcanivorax borkumensis (strain ATCC 700651 / DSM 11573 / NCIMB 13689 / SK2).